Consider the following 377-residue polypeptide: Chaperone MoxR1 (377 aa).

The tract at residues 1–33 (MTSAGGFPAGAGGYQTPGGHSASPAHEAPPGGA) is disordered. Positions 7–16 (FPAGAGGYQT) are enriched in gly residues. A compositionally biased stretch (low complexity) spans 19–33 (GHSASPAHEAPPGGA). 78 to 85 (GVPGVAKT) contacts ATP.

It belongs to the MoxR family. As to quaternary structure, interacts with RipA. Interacts with host Toll-like receptor 4 (TLR4).

Displays ATP-enhanced chaperone activity. Required for the proper folding of the peptidoglycan endopeptidase RipA and its secretion through the TAT secretion system. In vitro, prevents thermal aggregation of MalZ protein and protects the functional activity of the restriction enzyme NdeI from thermal inactivation. Its function is as follows. Could be a moonlighting protein that uses a multipronged approach to dampen host-directed immunity for efficient replication, survival and pathogenesis. Can enhance virulence by inhibiting autophagy and apoptosis, and disrupting cellular bioenergetics. Binds and activates host TLR4 on the surface of macrophage cells, leading to the activation of the host NFKB and MAPK signaling cascades and enhanced secretion of proinflammatory cytokines. Inhibits autophagic flux via activation of PI3K-AKT-MTOR-ULK1 signaling cascade and represses apoptosis via inhibiting protooncogene c-FOS and MAPK JNK1/2. Also induces robust disruption of cellular bioenergetics by metabolic reprogramming to rewire the citric acid cycle intermediates for its benefit. This is Chaperone MoxR1 from Mycobacterium tuberculosis (strain ATCC 25618 / H37Rv).